A 224-amino-acid polypeptide reads, in one-letter code: Putative O-methyltransferase MLBr01075 (224 aa).

Residues Val51, Glu73, 75–76 (GT), Ser81, Asp99, and Ile100 each bind S-adenosyl-L-methionine. Substrate is bound at residue Asp147. An S-adenosyl-L-methionine-binding site is contributed by Asp149.

Belongs to the class I-like SAM-binding methyltransferase superfamily. Cation-dependent O-methyltransferase family.

The protein is Putative O-methyltransferase MLBr01075 of Mycobacterium leprae (strain Br4923).